A 78-amino-acid polypeptide reads, in one-letter code: Small ribosomal subunit protein bS18 (78 aa).

The protein belongs to the bacterial ribosomal protein bS18 family. Part of the 30S ribosomal subunit. Forms a tight heterodimer with protein bS6.

Binds as a heterodimer with protein bS6 to the central domain of the 16S rRNA, where it helps stabilize the platform of the 30S subunit. This is Small ribosomal subunit protein bS18 from Frankia casuarinae (strain DSM 45818 / CECT 9043 / HFP020203 / CcI3).